A 343-amino-acid polypeptide reads, in one-letter code: uncharacterized protein (343 aa).

This sequence belongs to the histone deacetylase family.

Putative deacetylase. This is an uncharacterized protein from Methanocaldococcus jannaschii (strain ATCC 43067 / DSM 2661 / JAL-1 / JCM 10045 / NBRC 100440) (Methanococcus jannaschii).